Consider the following 403-residue polypeptide: Cystinosin homolog (403 aa).

The Lumenal portion of the chain corresponds to 1 to 122 (MKLPVSILFF…YSRITVIRSH (122 aa)). 4 N-linked (GlcNAc...) asparagine glycosylation sites follow: Asn-45, Asn-52, Asn-78, and Asn-96. A helical membrane pass occupies residues 123 to 143 (WLAILIQIVGWTYFAAWSVSF). Residues 124-190 (LAILIQIVGW…MYYNSHVKNI (67 aa)) enclose the PQ-loop 1 domain. Residues 144–162 (YPQMYLNFKRKSVVGLNFD) are Cytoplasmic-facing. Residues 163 to 183 (FLSLNLVGFGAYAMFNLLMYY) traverse the membrane as a helical segment. The Lumenal segment spans residues 184–206 (NSHVKNIYSMENPRSPPPVLLND). Residues 207–227 (VVFAVHAFLACFVTILQCIFY) form a helical membrane-spanning segment. Residues 228–237 (ERDQQRISTK) are Cytoplasmic-facing. A helical transmembrane segment spans residues 238–258 (CIILIIGLVSFGFVSVVVTVL). At 259 to 260 (NK) the chain is on the lumenal side. A helical transmembrane segment spans residues 261-283 (ITILDFVVSLSYIKMAVTCCKYF). The PQ-loop 2 domain occupies 266–326 (FVVSLSYIKM…MVLQAINVND (61 aa)). The Cytoplasmic portion of the chain corresponds to 284–294 (PQAYFNYQRKS). Residues 295–315 (TVGWSIGNILLDFTGGSLDIL) traverse the membrane as a helical segment. At 316–336 (QMVLQAINVNDWSAFYANPVK) the chain is on the lumenal side. Residues 337–357 (FGLGFVSIFFDIIFMIQHYAL) form a helical membrane-spanning segment. Topologically, residues 358–403 (YPDAEVPHNEYHGVDNPDPDSIVRDAEHGAADNESMESTDPIIVHD) are cytoplasmic. The segment covering 374 to 388 (PDPDSIVRDAEHGAA) has biased composition (basic and acidic residues). The disordered stretch occupies residues 374–403 (PDPDSIVRDAEHGAADNESMESTDPIIVHD).

The protein belongs to the cystinosin family.

Its subcellular location is the lysosome membrane. The protein resides in the cytoplasmic vesicle. It localises to the phagosome. It catalyses the reaction L-cystine(out) + H(+)(out) = L-cystine(in) + H(+)(in). Functionally, cystine/H(+) symporter that mediates export of cystine, the oxidized dimer of cysteine, from lysosomes. May play a role in the degradation of engulfed apoptotic cells. The chain is Cystinosin homolog (ctns-1) from Caenorhabditis briggsae.